The sequence spans 102 residues: Large ribosomal subunit protein bL21 (102 aa).

Belongs to the bacterial ribosomal protein bL21 family. Part of the 50S ribosomal subunit. Contacts protein L20.

Functionally, this protein binds to 23S rRNA in the presence of protein L20. This is Large ribosomal subunit protein bL21 from Bacillus subtilis (strain 168).